An 860-amino-acid chain; its full sequence is Leucine--tRNA ligase (860 aa).

The 'HIGH' region signature appears at 42-52 (PYPSGRLHMGH). A 'KMSKS' region motif is present at residues 619–623 (KMSKS). Residue Lys-622 coordinates ATP.

Belongs to the class-I aminoacyl-tRNA synthetase family.

Its subcellular location is the cytoplasm. It carries out the reaction tRNA(Leu) + L-leucine + ATP = L-leucyl-tRNA(Leu) + AMP + diphosphate. The sequence is that of Leucine--tRNA ligase from Salmonella typhi.